A 261-amino-acid chain; its full sequence is Potassium/proton antiporter CemA (261 aa).

Transmembrane regions (helical) follow at residues 47 to 67 (FLVF…GPWV) and 138 to 158 (IISH…YFIM).

This sequence belongs to the CemA family.

Its subcellular location is the plastid. It localises to the chloroplast inner membrane. It carries out the reaction K(+)(in) + H(+)(out) = K(+)(out) + H(+)(in). Functionally, contributes to K(+)/H(+) antiport activity by supporting proton efflux to control proton extrusion and homeostasis in chloroplasts in a light-dependent manner to modulate photosynthesis. Prevents excessive induction of non-photochemical quenching (NPQ) under continuous-light conditions. Indirectly promotes efficient inorganic carbon uptake into chloroplasts. This chain is Potassium/proton antiporter CemA, found in Ginkgo biloba (Ginkgo).